The following is a 333-amino-acid chain: tRNA (guanine(37)-N(1))/4-demethylwyosine(37)-methyltransferase Taw22 (333 aa).

Residues arginine 174, phenylalanine 191, 213 to 214 (EI), and 243 to 244 (DV) contribute to the S-adenosyl-L-methionine site.

This sequence belongs to the class I-like SAM-binding methyltransferase superfamily. TRM5/TYW2 family.

It localises to the cytoplasm. It carries out the reaction guanosine(37) in tRNA + S-adenosyl-L-methionine = N(1)-methylguanosine(37) in tRNA + S-adenosyl-L-homocysteine + H(+). The catalysed reaction is 4-demethylwyosine(37) in tRNA(Phe) + S-adenosyl-L-methionine = isowyosine(37) in tRNA(Phe) + S-adenosyl-L-homocysteine + H(+). Catalyzes both the N1-methylation of guanosine and the C7-methylation of 4-demethylwyosine (imG-14) at position 37 in tRNA(Phe). The chain is tRNA (guanine(37)-N(1))/4-demethylwyosine(37)-methyltransferase Taw22 from Pyrococcus abyssi (strain GE5 / Orsay).